The primary structure comprises 26 residues: Fumarylacetoacetate hydrolase domain-containing protein 2A (26 aa).

Belongs to the FAH family. Requires Ca(2+) as cofactor. Mg(2+) serves as cofactor.

May have hydrolase activity. This chain is Fumarylacetoacetate hydrolase domain-containing protein 2A, found in Mesocricetus auratus (Golden hamster).